Here is a 518-residue protein sequence, read N- to C-terminus: Integrator complex subunit 14 (518 aa).

Residues 2–204 (PTVVVMDVSL…KNVQSMFGKL (203 aa)) enclose the VWFA domain. Mg(2+) is bound by residues Ser10, Ser12, and Thr86. Residues 373 to 394 (SDAKENPYGDDDNKSPFPLQPK) are disordered. The segment covering 374-386 (DAKENPYGDDDNK) has biased composition (basic and acidic residues).

Belongs to the Integrator subunit 14 family. Component of the Integrator complex, composed of core subunits INTS1, INTS2, INTS3, INTS4, INTS5, INTS6, INTS7, INTS8, INTS9/RC74, INTS10, INTS11/CPSF3L, INTS12, INTS13, INTS14 and INTS15. The core complex associates with protein phosphatase 2A subunits PPP2CA and PPP2R1A, to form the Integrator-PP2A (INTAC) complex. INTS14 is part of the tail subcomplex, composed of INTS10, INTS13, INTS14 and INTS15.

The protein resides in the nucleus. Component of the integrator complex, a multiprotein complex that terminates RNA polymerase II (Pol II) transcription in the promoter-proximal region of genes. The integrator complex provides a quality checkpoint during transcription elongation by driving premature transcription termination of transcripts that are unfavorably configured for transcriptional elongation: the complex terminates transcription by (1) catalyzing dephosphorylation of the C-terminal domain (CTD) of Pol II subunit POLR2A/RPB1 and SUPT5H/SPT5, (2) degrading the exiting nascent RNA transcript via endonuclease activity and (3) promoting the release of Pol II from bound DNA. The integrator complex is also involved in terminating the synthesis of non-coding Pol II transcripts, such as enhancer RNAs (eRNAs), small nuclear RNAs (snRNAs), telomerase RNAs and long non-coding RNAs (lncRNAs). Within the integrator complex, INTS14 is part of the integrator tail module that acts as a platform for the recruitment of transcription factors at promoters. This is Integrator complex subunit 14 from Gallus gallus (Chicken).